A 397-amino-acid chain; its full sequence is Phosphoglycerate kinase (397 aa).

Substrate is bound by residues 21–23, R37, 60–63, R119, and R152; these read DFN and HLGR. ATP contacts are provided by residues K203, G294, E325, and 354–357; that span reads GGDS.

It belongs to the phosphoglycerate kinase family. In terms of assembly, monomer.

The protein resides in the cytoplasm. It carries out the reaction (2R)-3-phosphoglycerate + ATP = (2R)-3-phospho-glyceroyl phosphate + ADP. Its pathway is carbohydrate degradation; glycolysis; pyruvate from D-glyceraldehyde 3-phosphate: step 2/5. The polypeptide is Phosphoglycerate kinase (Chlorobium luteolum (strain DSM 273 / BCRC 81028 / 2530) (Pelodictyon luteolum)).